The chain runs to 205 residues: Large ribosomal subunit protein uL4 (205 aa).

A disordered region spans residues 48 to 79; the sequence is KAQKSRSDVSGGGKKPWKQKGSGHARAGTTRS.

Belongs to the universal ribosomal protein uL4 family. In terms of assembly, part of the 50S ribosomal subunit.

In terms of biological role, one of the primary rRNA binding proteins, this protein initially binds near the 5'-end of the 23S rRNA. It is important during the early stages of 50S assembly. It makes multiple contacts with different domains of the 23S rRNA in the assembled 50S subunit and ribosome. Functionally, forms part of the polypeptide exit tunnel. The protein is Large ribosomal subunit protein uL4 of Methylococcus capsulatus (strain ATCC 33009 / NCIMB 11132 / Bath).